A 151-amino-acid polypeptide reads, in one-letter code: Macrodomain Ter protein (151 aa).

Belongs to the MatP family. Homodimer.

It localises to the cytoplasm. Its function is as follows. Required for spatial organization of the terminus region of the chromosome (Ter macrodomain) during the cell cycle. Prevents early segregation of duplicated Ter macrodomains during cell division. Binds specifically to matS, which is a 13 bp signature motif repeated within the Ter macrodomain. This chain is Macrodomain Ter protein, found in Photorhabdus laumondii subsp. laumondii (strain DSM 15139 / CIP 105565 / TT01) (Photorhabdus luminescens subsp. laumondii).